A 571-amino-acid chain; its full sequence is Glutamate--tRNA ligase (571 aa).

The 'HIGH' region motif lies at 38–48; sequence PSPTGFMHIGG. The short motif at 316-320 is the 'KMSKS' region element; it reads KLSKR. Lys-319 is a binding site for ATP.

The protein belongs to the class-I aminoacyl-tRNA synthetase family. Glutamate--tRNA ligase type 1 subfamily. Monomer.

The protein localises to the cytoplasm. The enzyme catalyses tRNA(Glu) + L-glutamate + ATP = L-glutamyl-tRNA(Glu) + AMP + diphosphate. In terms of biological role, catalyzes the attachment of glutamate to tRNA(Glu) in a two-step reaction: glutamate is first activated by ATP to form Glu-AMP and then transferred to the acceptor end of tRNA(Glu). The sequence is that of Glutamate--tRNA ligase from Sorangium cellulosum (strain So ce56) (Polyangium cellulosum (strain So ce56)).